A 360-amino-acid polypeptide reads, in one-letter code: Phospho-N-acetylmuramoyl-pentapeptide-transferase (360 aa).

The next 10 helical transmembrane spans lie at 27–47, 70–90, 98–118, 134–154, 168–188, 199–219, 239–259, 263–283, 288–308, and 337–357; these read GALF…ISLL, GTPT…ILLW, VWVT…DDYL, LLLE…YSPA, TLLN…VGAG, GLAI…AYLV, LAVV…FNAP, IFMG…IAVA, IVLA…IIQV, and QVVI…LATL.

Belongs to the glycosyltransferase 4 family. MraY subfamily. It depends on Mg(2+) as a cofactor.

It localises to the cell inner membrane. It catalyses the reaction UDP-N-acetyl-alpha-D-muramoyl-L-alanyl-gamma-D-glutamyl-meso-2,6-diaminopimeloyl-D-alanyl-D-alanine + di-trans,octa-cis-undecaprenyl phosphate = di-trans,octa-cis-undecaprenyl diphospho-N-acetyl-alpha-D-muramoyl-L-alanyl-D-glutamyl-meso-2,6-diaminopimeloyl-D-alanyl-D-alanine + UMP. The protein operates within cell wall biogenesis; peptidoglycan biosynthesis. Functionally, catalyzes the initial step of the lipid cycle reactions in the biosynthesis of the cell wall peptidoglycan: transfers peptidoglycan precursor phospho-MurNAc-pentapeptide from UDP-MurNAc-pentapeptide onto the lipid carrier undecaprenyl phosphate, yielding undecaprenyl-pyrophosphoryl-MurNAc-pentapeptide, known as lipid I. The sequence is that of Phospho-N-acetylmuramoyl-pentapeptide-transferase from Methylorubrum extorquens (strain CM4 / NCIMB 13688) (Methylobacterium extorquens).